A 308-amino-acid chain; its full sequence is Taste receptor type 2 member 43 (308 aa).

Position 1 (Met-1) is a topological domain, extracellular. A helical transmembrane segment spans residues 2–22; that stretch reads ITFLPIIFSILVVVTFVIGNC. The Cytoplasmic portion of the chain corresponds to 23–46; it reads ANGFIALVNSTEWVKRQKISFADQ. A helical transmembrane segment spans residues 47 to 67; sequence ILTALAVSRVGLLWVLLLNWY. Over 68–86 the chain is Extracellular; it reads ATVLNPAFYSVEVRTIVYN. Residues 87–107 form a helical membrane-spanning segment; it reads LWAVINHFSNWLATSLSIFYL. The Cytoplasmic segment spans residues 108–126; that stretch reads LKIANFSNLIFLHLKRRVK. A helical transmembrane segment spans residues 127 to 147; that stretch reads SVVLVILLGPLLFLVCHLFVV. Residues 148–178 are Extracellular-facing; it reads NMNEIVRTKEYEGNMTWKSKLRSAMYLSNTT. N-linked (GlcNAc...) asparagine glycosylation is found at Asn-161 and Asn-176. A helical transmembrane segment spans residues 179–199; that stretch reads VTILANLVPFILTLISFLLLI. The Cytoplasmic portion of the chain corresponds to 200-229; the sequence is CSLCKHLKKMQLRDKGSQDPSTKVHIKALQ. A helical transmembrane segment spans residues 230–249; sequence TVISLLLCVIYFLSIMISSW. Over 250–258 the chain is Extracellular; sequence SLGRVENKA. A helical membrane pass occupies residues 259 to 279; sequence VFMFCKAIRFSYPSAHAFILI. At 280 to 308 the chain is on the cytoplasmic side; sequence WGNKKLKQTLLSVLWNVRYCVKGQKLPSP.

It belongs to the G-protein coupled receptor T2R family.

It localises to the membrane. It is found in the cell projection. Its subcellular location is the cilium membrane. Its function is as follows. Gustducin-coupled receptor immplicated in the perception of bitter compounds in the oral cavity and the gastrointestinal tract. Signals through PLCB2 and the calcium-regulated cation channel TRPM5. Activated by the sulfonyl amide sweeteners saccharin and acesulfame K. In airway epithelial cells, binding of bitter compounds increases the intracellular calcium ion concentration and stimulates ciliary beat frequency. May act as chemosensory receptors in airway epithelial cells to detect and eliminate potential noxious agents from the airways. The polypeptide is Taste receptor type 2 member 43 (TAS2R43) (Papio hamadryas (Hamadryas baboon)).